The chain runs to 24 residues: Xenoposin precursor fragment B2 (24 aa).

Expressed by the skin glands.

The protein localises to the secreted. In terms of biological role, has antimicrobial activity against Gram-negative bacterium E.coli ATCC 25922 (MIC=100 uM), Gram-positive bacterium S.auerus ATCC 25923 (MIC=25 uM). The polypeptide is Xenoposin precursor fragment B2 (Xenopus borealis (Kenyan clawed frog)).